The primary structure comprises 347 residues: Ileal sodium/bile acid cotransporter (347 aa).

The Extracellular portion of the chain corresponds to 1–29; that stretch reads MSNLTVGCLANATVCEGASCVAPESNFNA. 2 N-linked (GlcNAc...) asparagine glycosylation sites follow: asparagine 3 and asparagine 11. A helical membrane pass occupies residues 30–50; it reads ILSVVLSTVLTILLALVMFSM. At 51-83 the chain is on the cytoplasmic side; sequence GCNVEIKKFLGHIRRPWGIFIGFLCQFGIMPLT. Residues 84-104 form a helical membrane-spanning segment; it reads GFVLAVAFGIMPIQAVVVLIM. At 105 to 127 the chain is on the extracellular side; it reads GCCPGGTASNILAYWVDGDMDLS. The helical transmembrane segment at 128 to 148 threads the bilayer; the sequence is VSMTTCSTLLALGMMPLCLYV. At 149-158 the chain is on the cytoplasmic side; the sequence is YTKMWVDSGT. Residues 159 to 179 traverse the membrane as a helical segment; that stretch reads IVIPYDNIGTSLVALVVPVSI. At 180-196 the chain is on the extracellular side; the sequence is GMFVNHKWPQKAKIILK. Residues 197 to 217 form a helical membrane-spanning segment; that stretch reads VGSIAGAVLIVLIAVVGGILY. Over 218–225 the chain is Cytoplasmic; that stretch reads QSAWIIEP. The chain crosses the membrane as a helical span at residues 226–246; it reads KLWIIGTIFPMAGYSLGFFLA. Residues 247–289 lie on the Extracellular side of the membrane; that stretch reads RIAGQPWYRCRTVALETGMQNTQLCSTIVQLSFSPEDLTYVFT. Residues 290–310 form a helical membrane-spanning segment; sequence FPLIYSIFQIAFAAIFLGIYV. Over 311-347 the chain is Cytoplasmic; sequence AYRKCHGKNDAEFPDIKDTKTEPESSFHQMNGGFQPE. Residues 323–335 are compositionally biased toward basic and acidic residues; that stretch reads FPDIKDTKTEPES. The disordered stretch occupies residues 323–347; the sequence is FPDIKDTKTEPESSFHQMNGGFQPE. Serine 336 carries the post-translational modification Phosphoserine.

It belongs to the bile acid:sodium symporter (BASS) (TC 2.A.28) family. Monomer and homodimer.

The protein localises to the membrane. The catalysed reaction is taurocholate(out) + 2 Na(+)(out) = taurocholate(in) + 2 Na(+)(in). It carries out the reaction cholate(out) + 2 Na(+)(out) = cholate(in) + 2 Na(+)(in). The enzyme catalyses taurochenodeoxycholate(out) + 2 Na(+)(out) = taurochenodeoxycholate(in) + 2 Na(+)(in). It catalyses the reaction tauroursodeoxycholate(out) + 2 Na(+)(out) = tauroursodeoxycholate(in) + 2 Na(+)(in). The catalysed reaction is glycocholate(out) + 2 Na(+)(out) = glycocholate(in) + 2 Na(+)(in). It carries out the reaction tauronorcholate(out) + 2 Na(+)(out) = tauronorcholate(in) + 2 Na(+)(in). The enzyme catalyses tauroallocholate(out) + 2 Na(+)(out) = tauroallocholate(in) + 2 Na(+)(in). It catalyses the reaction taurodeoxycholate(out) + 2 Na(+)(out) = taurodeoxycholate(in) + 2 Na(+)(in). The catalysed reaction is tauro-beta-muricholate(out) + 2 Na(+)(out) = tauro-beta-muricholate(in) + 2 Na(+)(in). In terms of biological role, plays a critical role in the sodium-dependent reabsorption of bile acids from the lumen of the small intestine. Transports various bile acids, unconjugated or conjugated, such as cholate and taurocholate. Also responsible for bile acid transport in the renal proximal tubules, a salvage mechanism that helps conserve bile acids. Works collaboratively with the Na(+)-taurocholate cotransporting polypeptide (NTCP), the organic solute transporter (OST), and the bile salt export pump (BSEP), to ensure efficacious biological recycling of bile acids during enterohepatic circulation. The polypeptide is Ileal sodium/bile acid cotransporter (SLC10A2) (Oryctolagus cuniculus (Rabbit)).